Consider the following 264-residue polypeptide: Protein-L-isoaspartate O-methyltransferase (264 aa).

A disordered region spans residues 1–49 (MRKPVGSKDGSGVYSRQGLDGYTPANSNTRISTATLPRPEPLRPAASSA). The span at 24 to 35 (PANSNTRISTAT) shows a compositional bias: polar residues. Residue Ser-112 is part of the active site.

The protein belongs to the methyltransferase superfamily. L-isoaspartyl/D-aspartyl protein methyltransferase family.

Its subcellular location is the cytoplasm. The enzyme catalyses [protein]-L-isoaspartate + S-adenosyl-L-methionine = [protein]-L-isoaspartate alpha-methyl ester + S-adenosyl-L-homocysteine. Catalyzes the methyl esterification of L-isoaspartyl residues in peptides and proteins that result from spontaneous decomposition of normal L-aspartyl and L-asparaginyl residues. It plays a role in the repair and/or degradation of damaged proteins. This Bordetella avium (strain 197N) protein is Protein-L-isoaspartate O-methyltransferase.